Consider the following 856-residue polypeptide: MAP kinase phosphatase with leucine-rich repeats protein 3 (856 aa).

Residues 1 to 10 (MGNSHSSENG) are compositionally biased toward low complexity. Disordered regions lie at residues 1 to 24 (MGNS…GGGS), 84 to 195 (VKKN…SSVL), and 214 to 326 (DDNS…NAKD). G2 is lipidated: N-myristoyl glycine. Gly residues predominate over residues 11–24 (GNSGSGGGSGGGGS). Residues 90–142 (NSSNNNSNNNSNNNNNNNTLNNSTIITTTTTTTTTSTPTTTIMITPPQQQQQQ) show a composition bias toward low complexity. Over residues 155 to 165 (ESSTPNEQQIR) the composition is skewed to polar residues. Low complexity-rich tracts occupy residues 178-195 (ESSF…SSVL) and 224-243 (QQQQ…QQTQ). 2 stretches are compositionally biased toward polar residues: residues 254-265 (IVNNKSSSTTNI) and 272-281 (AQTSRSTSIP). Positions 306–323 (NSLSSSNIITPNNTTNTN) are enriched in low complexity. 8 LRR repeats span residues 344–365 (KIFS…ILSI), 370–391 (EIQE…QLVK), 392–413 (SLTT…VFIE), 416–437 (SLTS…IDQI), 439–461 (NLKY…SNLS), 462–484 (QLIS…DDLI), 485–506 (NLRM…RKLV), and 507–528 (NLVT…FAYL). Residues 554–577 (NINSNNNDSNNSNNNNNNNNDNNN) are disordered. One can recognise a Tyrosine-protein phosphatase domain in the interval 632-773 (IPSEIIPGIF…LLKYEAKLFC (142 aa)). C717 (phosphocysteine intermediate) is an active-site residue. Positions 810–856 (INNSSNSNNNNSTDNSNNSSTSTTPNLSSLSSDSSSSASLSKLSISK) are disordered.

Belongs to the protein-tyrosine phosphatase family. Non-receptor class dual specificity subfamily.

It carries out the reaction O-phospho-L-tyrosyl-[protein] + H2O = L-tyrosyl-[protein] + phosphate. It catalyses the reaction O-phospho-L-seryl-[protein] + H2O = L-seryl-[protein] + phosphate. The enzyme catalyses O-phospho-L-threonyl-[protein] + H2O = L-threonyl-[protein] + phosphate. Functionally, probable phosphatase with dual specificity toward Ser/Thr and Tyr-containing proteins. The chain is MAP kinase phosphatase with leucine-rich repeats protein 3 (mpl3) from Dictyostelium discoideum (Social amoeba).